Here is a 181-residue protein sequence, read N- to C-terminus: Transcription factor bHLH167 (181 aa).

Residues 1 to 22 (MGRAREIGEGNSSSLREQRNLR) are disordered. Residues 14-63 (SLREQRNLREKDRRMRMKHLFSILSSHVSPTRKLPVPHLIDQATSYMIQL) form the bHLH domain.

It belongs to the bHLH protein family.

The protein resides in the nucleus. This chain is Transcription factor bHLH167, found in Arabidopsis thaliana (Mouse-ear cress).